Consider the following 131-residue polypeptide: Global transcriptional regulator Spx (131 aa).

Cys10 and Cys13 form a disulfide bridge.

Belongs to the ArsC family. Spx subfamily. As to quaternary structure, interacts with the C-terminal domain of the alpha subunit of the RNAP.

It localises to the cytoplasm. Functionally, global transcriptional regulator that plays a key role in stress response and exerts either positive or negative regulation of genes. Acts by interacting with the C-terminal domain of the alpha subunit of the RNA polymerase (RNAP). This interaction can enhance binding of RNAP to the promoter region of target genes and stimulate their transcription, or block interaction of RNAP with activator. The protein is Global transcriptional regulator Spx of Shouchella clausii (strain KSM-K16) (Alkalihalobacillus clausii).